Reading from the N-terminus, the 535-residue chain is Palmdelphin (535 aa).

Residues 1–105 adopt a coiled-coil conformation; it reads MEEAELLKER…KEELQVSTKE (105 aa). Positions 423–450 are disordered; it reads VVIDDDDDDDDDEEADKKGEENTKESVS. Over residues 424–436 the composition is skewed to acidic residues; that stretch reads VIDDDDDDDDDEE. Basic and acidic residues predominate over residues 437–446; it reads ADKKGEENTK.

Belongs to the paralemmin family.

It is found in the cytoplasm. The protein localises to the cell projection. It localises to the dendrite. The protein resides in the dendritic spine. In Xenopus laevis (African clawed frog), this protein is Palmdelphin (palmd).